The primary structure comprises 2543 residues: Highly reducing polyketide synthase GPY1 (2543 aa).

The 427-residue stretch at 9–435 folds into the Ketosynthase family 3 (KS3) domain; the sequence is REPIAIVSMA…GSTAHAVVEF (427 aa). Residues cysteine 182, histidine 318, and histidine 358 each act as for beta-ketoacyl synthase activity in the active site. A malonyl-CoA:ACP transacylase (MAT) domain region spans residues 574–881; the sequence is TFTGQGAMWS…PFFATMLRNA (308 aa). Residues 953-1089 are N-terminal hotdog fold; that stretch reads HEILGSRCRG…GRAAVLETSK (137 aa). The tract at residues 953 to 1253 is dehydratase (DH) domain; that stretch reads HEILGSRCRG…GLQMDRATSD (301 aa). The PKS/mFAS DH domain occupies 953 to 1256; that stretch reads HEILGSRCRG…MDRATSDDNT (304 aa). Histidine 985 acts as the Proton acceptor; for dehydratase activity in catalysis. Residues 1103–1256 form a C-terminal hotdog fold region; it reads MPLKVPLKSY…MDRATSDDNT (154 aa). Aspartate 1169 (proton donor; for dehydratase activity) is an active-site residue. The tract at residues 1399 to 1587 is methyltransferase (CMet) domain; that stretch reads NDLLYRFYEE…LDEWRNELAA (189 aa). An enoyl reductase (ER) domain region spans residues 1830 to 2136; the sequence is GILESLTMAQ…IEGTSNKQVV (307 aa). Residues 2161–2335 form a ketoreductase (KR) domain region; the sequence is TYIITGGLGG…ASSVDLGFVE (175 aa). The region spanning 2464–2541 is the Carrier domain; sequence ALQPFVCTAL…DLSARVSRMI (78 aa). Serine 2501 is modified (O-(pantetheine 4'-phosphoryl)serine).

In terms of biological role, highly reducing polyketide synthase; part of the gene cluster that mediates the biosynthesis of gibepyrone A, a 2H-pyran-2-one metabolite exhibiting a moderate antimicrobial activity against Gram-positive bacteria and yeasts. The highly reducing polyketide synthase GPY1 is sufficient to produce gibepyrone A. GPY1 uses an acetyl-CoA starter unit, three malonyl-CoA extender units, and two SAM-dependent methylations to establish the gibepyrone A carbon backbone, followed by product release upon intramolecular cyclization. The gibepyrone A derivatives gibepyrones B and D are produced by cluster-independent P450 monooxygenases, probably to protect the fungus from the toxic product. In contrast, the formation of gibepyrones E and F from gibepyrone A is a spontaneous process and independent of enzymatic activity. In Gibberella fujikuroi (strain CBS 195.34 / IMI 58289 / NRRL A-6831) (Bakanae and foot rot disease fungus), this protein is Highly reducing polyketide synthase GPY1.